The primary structure comprises 81 residues: Photosystem I iron-sulfur center (81 aa).

4Fe-4S ferredoxin-type domains are found at residues 2–31 and 39–68; these read AHTV…MVPW and IASA…IRVY. The [4Fe-4S] cluster site is built by C11, C14, C17, C21, C48, C51, C54, and C58.

In terms of assembly, the eukaryotic PSI reaction center is composed of at least 11 subunits. The cofactor is [4Fe-4S] cluster.

The protein localises to the plastid. Its subcellular location is the cyanelle thylakoid membrane. It catalyses the reaction reduced [plastocyanin] + hnu + oxidized [2Fe-2S]-[ferredoxin] = oxidized [plastocyanin] + reduced [2Fe-2S]-[ferredoxin]. Its function is as follows. Apoprotein for the two 4Fe-4S centers FA and FB of photosystem I (PSI); essential for photochemical activity. FB is the terminal electron acceptor of PSI, donating electrons to ferredoxin. The C-terminus interacts with PsaA/B/D and helps assemble the protein into the PSI complex. Required for binding of PsaD and PsaE to PSI. PSI is a cytochrome c6-ferredoxin oxidoreductase, converting photonic excitation into a charge separation, which transfers an electron from the donor P700 chlorophyll pair to the spectroscopically characterized acceptors A0, A1, FX, FA and FB in turn. The chain is Photosystem I iron-sulfur center from Cyanophora paradoxa.